The chain runs to 310 residues: Thymidine kinase (310 aa).

Position 17–24 (17–24 (GPFGIGKT)) interacts with ATP. Glutamate 45 functions as the Proton acceptor in the catalytic mechanism. Glutamine 86 is a substrate binding site. Arginine 176 lines the ATP pocket. Position 182 (arginine 182) interacts with substrate.

The protein belongs to the herpesviridae thymidine kinase family. As to quaternary structure, homodimer.

The enzyme catalyses thymidine + ATP = dTMP + ADP + H(+). Functionally, catalyzes the transfer of the gamma-phospho group of ATP to thymidine to generate dTMP in the salvage pathway of pyrimidine synthesis. The dTMP serves as a substrate for DNA polymerase during viral DNA replication. Allows the virus to be reactivated and to grow in non-proliferative cells lacking a high concentration of phosphorylated nucleic acid precursors. The sequence is that of Thymidine kinase from Gallus gallus (Chicken).